The chain runs to 223 residues: Deoxyribose-phosphate aldolase 1 (223 aa).

D91 (proton donor/acceptor) is an active-site residue. Residue K153 is the Schiff-base intermediate with acetaldehyde of the active site. The active-site Proton donor/acceptor is the K182.

It belongs to the DeoC/FbaB aldolase family. DeoC type 1 subfamily.

The protein localises to the cytoplasm. The enzyme catalyses 2-deoxy-D-ribose 5-phosphate = D-glyceraldehyde 3-phosphate + acetaldehyde. It participates in carbohydrate degradation; 2-deoxy-D-ribose 1-phosphate degradation; D-glyceraldehyde 3-phosphate and acetaldehyde from 2-deoxy-alpha-D-ribose 1-phosphate: step 2/2. Functionally, catalyzes a reversible aldol reaction between acetaldehyde and D-glyceraldehyde 3-phosphate to generate 2-deoxy-D-ribose 5-phosphate. This is Deoxyribose-phosphate aldolase 1 from Yersinia pestis.